Reading from the N-terminus, the 414-residue chain is Transforming growth factor beta-2 proprotein (414 aa).

The signal sequence occupies residues 1–20 (MHYCVLSAFLLLHLVTAALS). 3 N-linked (GlcNAc...) asparagine glycosylation sites follow: Asn72, Asn140, and Asn241. 4 disulfide bridges follow: Cys309/Cys318, Cys317/Cys380, Cys346/Cys411, and Cys350/Cys413.

The protein belongs to the TGF-beta family. In terms of assembly, interacts with the serine proteases, HTRA1 and HTRA3. Interacts with ASPN. Interacts with MFAP5. As to quaternary structure, interacts with Transforming growth factor beta-2 (TGF-beta-2) chain; interaction is non-covalent and maintains (TGF-beta-2) in a latent state. Interacts with LRRC32/GARP; leading to regulate activation of TGF-beta-2. Interacts with NREP; the interaction results in a decrease in TGFB2 autoinduction. Transforming growth factor beta-2: Homodimer; disulfide-linked. Transforming growth factor beta-2: Interacts with TGF-beta receptors (TGFBR1 and TGFBR2), leading to signal transduction. The precursor proprotein is cleaved in the Golgi apparatus to form Transforming growth factor beta-2 (TGF-beta-2) and Latency-associated peptide (LAP) chains, which remain non-covalently linked, rendering TGF-beta-2 inactive.

Its subcellular location is the secreted. It is found in the extracellular space. It localises to the extracellular matrix. In terms of biological role, precursor of the Latency-associated peptide (LAP) and Transforming growth factor beta-2 (TGF-beta-2) chains, which constitute the regulatory and active subunit of TGF-beta-2, respectively. Required to maintain the Transforming growth factor beta-2 (TGF-beta-2) chain in a latent state during storage in extracellular matrix. Associates non-covalently with TGF-beta-2 and regulates its activation via interaction with 'milieu molecules', such as LTBP1 and LRRC32/GARP, that control activation of TGF-beta-2. Its function is as follows. Multifunctional protein that regulates various processes such as angiogenesis and heart development. Activation into mature form follows different steps: following cleavage of the proprotein in the Golgi apparatus, Latency-associated peptide (LAP) and Transforming growth factor beta-2 (TGF-beta-2) chains remain non-covalently linked rendering TGF-beta-2 inactive during storage in extracellular matrix. At the same time, LAP chain interacts with 'milieu molecules', such as LTBP1 and LRRC32/GARP, that control activation of TGF-beta-2 and maintain it in a latent state during storage in extracellular milieus. Once activated following release of LAP, TGF-beta-2 acts by binding to TGF-beta receptors (TGFBR1 and TGFBR2), which transduce signal. This chain is Transforming growth factor beta-2 proprotein (TGFB2), found in Mustela putorius furo (European domestic ferret).